A 147-amino-acid chain; its full sequence is Nucleoside diphosphate kinase (147 aa).

6 residues coordinate ATP: Lys-9, Phe-57, Arg-85, Thr-91, Arg-102, and Asn-112. The active-site Pros-phosphohistidine intermediate is the His-115.

It belongs to the NDK family. As to quaternary structure, homotetramer. Requires Mg(2+) as cofactor.

Its subcellular location is the cytoplasm. It catalyses the reaction a 2'-deoxyribonucleoside 5'-diphosphate + ATP = a 2'-deoxyribonucleoside 5'-triphosphate + ADP. It carries out the reaction a ribonucleoside 5'-diphosphate + ATP = a ribonucleoside 5'-triphosphate + ADP. Major role in the synthesis of nucleoside triphosphates other than ATP. The ATP gamma phosphate is transferred to the NDP beta phosphate via a ping-pong mechanism, using a phosphorylated active-site intermediate. The protein is Nucleoside diphosphate kinase of Listeria monocytogenes serotype 4b (strain F2365).